We begin with the raw amino-acid sequence, 293 residues long: Formamidopyrimidine-DNA glycosylase (293 aa).

Pro2 functions as the Schiff-base intermediate with DNA in the catalytic mechanism. Glu3 acts as the Proton donor in catalysis. The active-site Proton donor; for beta-elimination activity is Lys58. DNA-binding residues include His104, Arg123, and Arg166. The FPG-type zinc finger occupies 257-293 (KVYDREGEPCPTLRCKGHVQRIVQAGRSTFFCATCQR). The active-site Proton donor; for delta-elimination activity is Arg283.

It belongs to the FPG family. As to quaternary structure, monomer. It depends on Zn(2+) as a cofactor.

It catalyses the reaction Hydrolysis of DNA containing ring-opened 7-methylguanine residues, releasing 2,6-diamino-4-hydroxy-5-(N-methyl)formamidopyrimidine.. The catalysed reaction is 2'-deoxyribonucleotide-(2'-deoxyribose 5'-phosphate)-2'-deoxyribonucleotide-DNA = a 3'-end 2'-deoxyribonucleotide-(2,3-dehydro-2,3-deoxyribose 5'-phosphate)-DNA + a 5'-end 5'-phospho-2'-deoxyribonucleoside-DNA + H(+). Its function is as follows. Involved in base excision repair of DNA damaged by oxidation or by mutagenic agents. Acts as a DNA glycosylase that recognizes and removes damaged bases. Has a preference for oxidized purines, such as 7,8-dihydro-8-oxoguanine (8-oxoG). Has AP (apurinic/apyrimidinic) lyase activity and introduces nicks in the DNA strand. Cleaves the DNA backbone by beta-delta elimination to generate a single-strand break at the site of the removed base with both 3'- and 5'-phosphates. This Azorhizobium caulinodans (strain ATCC 43989 / DSM 5975 / JCM 20966 / LMG 6465 / NBRC 14845 / NCIMB 13405 / ORS 571) protein is Formamidopyrimidine-DNA glycosylase.